A 252-amino-acid polypeptide reads, in one-letter code: Agamous-like MADS-box protein AGL6 (252 aa).

The 55-residue stretch at 3–57 (RGRVEMKRIENKINRQVTFSKRRNGLLKKAYELSVLCDAEVALIIFSSRGKLYEF) folds into the MADS-box domain. The K-box domain maps to 86 to 176 (TQSWCQEVTK…KIKFETEGHA (91 aa)). The stretch at 91 to 173 (QEVTKLKSKY…KQLKIKFETE (83 aa)) forms a coiled coil.

In terms of assembly, forms a heterodimer with AGAMOUS. Interacts with AGL15 and AGL16. As to expression, preferentially expressed in flowers.

It localises to the nucleus. In terms of biological role, probable transcription factor. Forms a heterodimer via the K-box domain with AG, that could be involved in genes regulation during floral meristem development. The sequence is that of Agamous-like MADS-box protein AGL6 (AGL6) from Arabidopsis thaliana (Mouse-ear cress).